The chain runs to 291 residues: tRNA U34 carboxymethyltransferase (291 aa).

Residues Lys-61, Trp-75, Lys-80, Gly-100, 122 to 124 (DPS), 149 to 150 (VE), Tyr-169, and Arg-284 each bind carboxy-S-adenosyl-L-methionine.

Belongs to the class I-like SAM-binding methyltransferase superfamily. CmoB family. Homotetramer.

It carries out the reaction carboxy-S-adenosyl-L-methionine + 5-hydroxyuridine(34) in tRNA = 5-carboxymethoxyuridine(34) in tRNA + S-adenosyl-L-homocysteine + H(+). Its function is as follows. Catalyzes carboxymethyl transfer from carboxy-S-adenosyl-L-methionine (Cx-SAM) to 5-hydroxyuridine (ho5U) to form 5-carboxymethoxyuridine (cmo5U) at position 34 in tRNAs. This is tRNA U34 carboxymethyltransferase from Campylobacter jejuni subsp. jejuni serotype O:2 (strain ATCC 700819 / NCTC 11168).